A 574-amino-acid chain; its full sequence is MKDMSNKKIFKKYSRVAGLLTAALIVGNLVTANADSNKQNTANTETTTTNEQPKPESSELTTEKAGQKMDDMLNSNDMIKLAPKEMPLESAEKEEKKSEDNKKSEEDHTEEINDKIYSLNYNELEVLAKNGETIENFVPKEGVKKADKFIVIERKKKNINTTPVDISIIDSVTDRTYPAALQLANKGFTENKPDAVVTKRNPQKIHIDLPGMGDKATVEVNDPTYANVSTAIDNLVNQWHDNYSGGNTLPARTQYTESMVYSKSQIEAALNVNSKILDGTLGIDFKSISKGEKKVMIAAYKQIFYTVSANLPNNPADVFDKSVTFKELQAKGVSNEAPPLFVSNVAYGRTVFVKLETSSKSNDVEAAFSAALKGTDVKTNGKYSDILENSSFTAVVLGADAAEHNKVVTKDFDVIRNVIKANATFSRKNPAYPISYTSVFLKNNKIAGVNNRSEYVETTSTEYTSGKINLSHQGAYVAQYEILWDEINYDDKGKEVITKRRWDNNWYSKTSPFSTVIPLGANSRNIRIMARECTGLAWEWWRKVIDERDVKLSKEINVNISGSTLSPYGSITYK.

The N-terminal stretch at 1–36 is a signal peptide; that stretch reads MKDMSNKKIFKKYSRVAGLLTAALIVGNLVTANADS. The span at 37–52 shows a compositional bias: low complexity; it reads NKQNTANTETTTTNEQ. 2 disordered regions span residues 37–64 and 84–111; these read NKQNTANTETTTTNEQPKPESSELTTEK and KEMPLESAEKEEKKSEDNKKSEEDHTEE. A compositionally biased stretch (basic and acidic residues) spans 53-64; sequence PKPESSELTTEK. 4 beta stranded membrane-spanning segments follow: residues 263-276, 283-292, 361-370, and 378-390; these read KSQIEAALNVNSKI, IDFKSISKGE, SNDVEAAFSA, and KTNGKYSDILENS. A Conserved undecapeptide motif is present at residues 532–542; the sequence is ECTGLAWEWWR. Residues 564–565 carry the Cholesterol binding motif; the sequence is TL.

Belongs to the cholesterol-dependent cytolysin family. In terms of assembly, homooligomeric pore complex of 35 to 50 subunits; when inserted in the host membrane.

Its subcellular location is the secreted. The protein resides in the host cell membrane. Functionally, a cholesterol-dependent toxin that causes cytolysis by forming pores in cholesterol containing host membranes. After binding to target membranes, the protein undergoes a major conformation change, leading to its insertion in the host membrane and formation of an oligomeric pore complex. Cholesterol is required for binding to host membranes, membrane insertion and pore formation; cholesterol binding is mediated by a Thr-Leu pair in the C-terminus. Can be reversibly inactivated by oxidation. This Streptococcus canis protein is Streptolysin O (slo).